The sequence spans 217 residues: Thymidylate kinase (217 aa).

12-19 (GIDGSGKS) is a binding site for ATP.

Belongs to the thymidylate kinase family.

It carries out the reaction dTMP + ATP = dTDP + ADP. Its function is as follows. Phosphorylation of dTMP to form dTDP in both de novo and salvage pathways of dTTP synthesis. The protein is Thymidylate kinase of Cereibacter sphaeroides (strain ATCC 17023 / DSM 158 / JCM 6121 / CCUG 31486 / LMG 2827 / NBRC 12203 / NCIMB 8253 / ATH 2.4.1.) (Rhodobacter sphaeroides).